Consider the following 567-residue polypeptide: Proline--tRNA ligase (567 aa).

Belongs to the class-II aminoacyl-tRNA synthetase family. ProS type 1 subfamily. In terms of assembly, homodimer.

It is found in the cytoplasm. It catalyses the reaction tRNA(Pro) + L-proline + ATP = L-prolyl-tRNA(Pro) + AMP + diphosphate. Functionally, catalyzes the attachment of proline to tRNA(Pro) in a two-step reaction: proline is first activated by ATP to form Pro-AMP and then transferred to the acceptor end of tRNA(Pro). As ProRS can inadvertently accommodate and process non-cognate amino acids such as alanine and cysteine, to avoid such errors it has two additional distinct editing activities against alanine. One activity is designated as 'pretransfer' editing and involves the tRNA(Pro)-independent hydrolysis of activated Ala-AMP. The other activity is designated 'posttransfer' editing and involves deacylation of mischarged Ala-tRNA(Pro). The misacylated Cys-tRNA(Pro) is not edited by ProRS. The chain is Proline--tRNA ligase from Staphylococcus epidermidis (strain ATCC 35984 / DSM 28319 / BCRC 17069 / CCUG 31568 / BM 3577 / RP62A).